The sequence spans 45 residues: Large ribosomal subunit protein bL34 (45 aa).

The disordered stretch occupies residues 1-45 (MTKRTFGGTSRKRKRVSGFRVRMRSHTGRRVIKSRRKRGRERIAV). Over residues 10–45 (SRKRKRVSGFRVRMRSHTGRRVIKSRRKRGRERIAV) the composition is skewed to basic residues.

This sequence belongs to the bacterial ribosomal protein bL34 family.

The polypeptide is Large ribosomal subunit protein bL34 (Prochlorococcus marinus subsp. pastoris (strain CCMP1986 / NIES-2087 / MED4)).